Reading from the N-terminus, the 429-residue chain is MGKNVVVLGTQWGDEGKGKIVDLLTEHAAAVVRYQGGHNAGHTLVIDGEKTVLHLIPSGVLREGVQCLIGNGVVVAPDALLREITKLEEKGVPVRERLRISPSCPLILSFHVALDQAREKARGELKIGTTGRGIGPAYEDKVARRGLRVGDLLNMPRFEDKLRELVDYHNFMLVGYYKEPAIEFEKTLAECKEYAELLKPLMLDVTAELHDLRRAGKDIMFEGAQGSLLDIDHGTYPYVTSSNTTAGGVATGSGVGPMFLDYILGITKAYTTRVGSGPFPTELFDEVGAHLAKQGHEFGATTGRARRCGWFDAVILRRAIDVNSISGICLTKLDVLDGLETINICTGYKDAQGNAVAPTDADSYVGLQPVYEEVPGWSESTVGAKTLEELPANARAYIKRVEELIGAPIDIISTGPDRNETIVLRHPFA.

GTP-binding positions include 13 to 19 (GDEGKGK) and 41 to 43 (GHT). Asp14 serves as the catalytic Proton acceptor. The Mg(2+) site is built by Asp14 and Gly41. IMP is bound by residues 14–17 (DEGK), 39–42 (NAGH), Thr130, Arg144, Gln225, Thr240, and Arg304. Catalysis depends on His42, which acts as the Proton donor. 300–306 (ATTGRAR) is a binding site for substrate. Residues Arg306, 332-334 (KLD), and 413-415 (STG) each bind GTP.

This sequence belongs to the adenylosuccinate synthetase family. Homodimer. The cofactor is Mg(2+).

It is found in the cytoplasm. It catalyses the reaction IMP + L-aspartate + GTP = N(6)-(1,2-dicarboxyethyl)-AMP + GDP + phosphate + 2 H(+). The protein operates within purine metabolism; AMP biosynthesis via de novo pathway; AMP from IMP: step 1/2. Functionally, plays an important role in the de novo pathway of purine nucleotide biosynthesis. Catalyzes the first committed step in the biosynthesis of AMP from IMP. This is Adenylosuccinate synthetase from Pseudomonas fluorescens (strain Pf0-1).